Reading from the N-terminus, the 98-residue chain is Integration host factor subunit beta (98 aa).

This sequence belongs to the bacterial histone-like protein family. In terms of assembly, heterodimer of an alpha and a beta chain.

Its function is as follows. This protein is one of the two subunits of integration host factor, a specific DNA-binding protein that functions in genetic recombination as well as in transcriptional and translational control. In Hahella chejuensis (strain KCTC 2396), this protein is Integration host factor subunit beta.